Consider the following 143-residue polypeptide: Synuclein (143 aa).

3 consecutive repeat copies span residues 20 to 30 (EKTKQGVQDAA), 31 to 41 (EKTKQGVQDAA), and 42 to 52 (EKTKEGVMYVG). Residues 20 to 78 (EKTKQGVQDAAEKTKQGVQDAAEKTKEGVMYVGTKTKEGVVQSVNTVTEKTKEQANVVG) are 5 X 11 AA tandem repeats of [EGST]-K-T-K-[EQ]-[GQ]-[VA]-X(4). The stretch at 53–67 (TKTKEGVVQSVNTVT) is one 4; approximate repeat. Residues 68 to 78 (EKTKEQANVVG) form repeat 5. The tract at residues 113-143 (REIPAEQVAEGKQTTQEPLVEATEATEETGK) is disordered.

This sequence belongs to the synuclein family. Nervous system tissue. Found in the electric lobe, the brain and the spinal cord.

The protein resides in the nucleus. May have a role in synaptic regulation or signal transduction. This is Synuclein from Tetronarce californica (Pacific electric ray).